Consider the following 279-residue polypeptide: NAD kinase (279 aa).

The Proton acceptor role is filled by Asp-57. Residues 57–58 (DG), 133–134 (NE), Arg-159, Asp-161, and 172–177 (TAYNKS) contribute to the NAD(+) site.

Belongs to the NAD kinase family. It depends on a divalent metal cation as a cofactor.

The protein localises to the cytoplasm. The enzyme catalyses NAD(+) + ATP = ADP + NADP(+) + H(+). In terms of biological role, involved in the regulation of the intracellular balance of NAD and NADP, and is a key enzyme in the biosynthesis of NADP. Catalyzes specifically the phosphorylation on 2'-hydroxyl of the adenosine moiety of NAD to yield NADP. The protein is NAD kinase of Streptococcus pyogenes serotype M28 (strain MGAS6180).